The chain runs to 248 residues: PF03932 family protein CutC (248 aa).

Belongs to the CutC family. In terms of assembly, homodimer.

It localises to the cytoplasm. This Escherichia coli (strain 55989 / EAEC) protein is PF03932 family protein CutC.